Here is a 219-residue protein sequence, read N- to C-terminus: uncharacterized protein (219 aa).

Phosphoserine is present on Ser-23. Lys-137 participates in a covalent cross-link: Glycyl lysine isopeptide (Lys-Gly) (interchain with G-Cter in SUMO).

It localises to the cytoplasm. This is an uncharacterized protein from Saccharomyces cerevisiae (strain ATCC 204508 / S288c) (Baker's yeast).